We begin with the raw amino-acid sequence, 133 residues long: ATP synthase epsilon chain, chloroplastic (133 aa).

This sequence belongs to the ATPase epsilon chain family. As to quaternary structure, F-type ATPases have 2 components, CF(1) - the catalytic core - and CF(0) - the membrane proton channel. CF(1) has five subunits: alpha(3), beta(3), gamma(1), delta(1), epsilon(1). CF(0) has three main subunits: a, b and c.

Its subcellular location is the plastid. The protein localises to the chloroplast thylakoid membrane. In terms of biological role, produces ATP from ADP in the presence of a proton gradient across the membrane. The sequence is that of ATP synthase epsilon chain, chloroplastic from Solanum lycopersicum (Tomato).